Reading from the N-terminus, the 539-residue chain is CTP synthase (539 aa).

Residues 1 to 268 (MSFKSIFLTG…SDFLLNKLGF (268 aa)) form an amidoligase domain region. Ser14 is a binding site for CTP. Ser14 is a binding site for UTP. 15 to 20 (SLGKGL) is an ATP binding site. Tyr55 lines the L-glutamine pocket. Asp72 lines the ATP pocket. Positions 72 and 142 each coordinate Mg(2+). Residues 149-151 (DIE), 188-193 (KTKPTQ), and Lys224 contribute to the CTP site. UTP-binding positions include 188 to 193 (KTKPTQ) and Lys224. The region spanning 294-532 (RIGLVGKYLE…IRAAKAYSLE (239 aa)) is the Glutamine amidotransferase type-1 domain. Residue Gly353 coordinates L-glutamine. Cys380 (nucleophile; for glutamine hydrolysis) is an active-site residue. L-glutamine-binding positions include 381–384 (LGMQ), Glu404, and Arg460. Catalysis depends on residues His505 and Glu507.

The protein belongs to the CTP synthase family. Homotetramer.

The enzyme catalyses UTP + L-glutamine + ATP + H2O = CTP + L-glutamate + ADP + phosphate + 2 H(+). It carries out the reaction L-glutamine + H2O = L-glutamate + NH4(+). The catalysed reaction is UTP + NH4(+) + ATP = CTP + ADP + phosphate + 2 H(+). It participates in pyrimidine metabolism; CTP biosynthesis via de novo pathway; CTP from UDP: step 2/2. Allosterically activated by GTP, when glutamine is the substrate; GTP has no effect on the reaction when ammonia is the substrate. The allosteric effector GTP functions by stabilizing the protein conformation that binds the tetrahedral intermediate(s) formed during glutamine hydrolysis. Inhibited by the product CTP, via allosteric rather than competitive inhibition. Catalyzes the ATP-dependent amination of UTP to CTP with either L-glutamine or ammonia as the source of nitrogen. Regulates intracellular CTP levels through interactions with the four ribonucleotide triphosphates. This chain is CTP synthase, found in Chlamydia trachomatis serovar L2 (strain ATCC VR-902B / DSM 19102 / 434/Bu).